We begin with the raw amino-acid sequence, 468 residues long: ATP synthase subunit beta (468 aa).

148–155 (GGAGVGKT) is an ATP binding site.

Belongs to the ATPase alpha/beta chains family. F-type ATPases have 2 components, CF(1) - the catalytic core - and CF(0) - the membrane proton channel. CF(1) has five subunits: alpha(3), beta(3), gamma(1), delta(1), epsilon(1). CF(0) has three main subunits: a(1), b(2) and c(9-12). The alpha and beta chains form an alternating ring which encloses part of the gamma chain. CF(1) is attached to CF(0) by a central stalk formed by the gamma and epsilon chains, while a peripheral stalk is formed by the delta and b chains.

The protein localises to the cell membrane. The enzyme catalyses ATP + H2O + 4 H(+)(in) = ADP + phosphate + 5 H(+)(out). Produces ATP from ADP in the presence of a proton gradient across the membrane. The catalytic sites are hosted primarily by the beta subunits. The sequence is that of ATP synthase subunit beta from Stenotrophomonas maltophilia (strain K279a).